A 123-amino-acid chain; its full sequence is Large ribosomal subunit protein uL14 (123 aa).

The protein belongs to the universal ribosomal protein uL14 family. In terms of assembly, part of the 50S ribosomal subunit. Forms a cluster with proteins L3 and L19. In the 70S ribosome, L14 and L19 interact and together make contacts with the 16S rRNA in bridges B5 and B8.

In terms of biological role, binds to 23S rRNA. Forms part of two intersubunit bridges in the 70S ribosome. The protein is Large ribosomal subunit protein uL14 of Buchnera aphidicola subsp. Acyrthosiphon kondoi (Acyrthosiphon kondoi symbiotic bacterium).